The primary structure comprises 66 residues: Small archaeal modifier protein 2 (66 aa).

Lys58 participates in a covalent cross-link: Glycyl lysine isopeptide (Lys-Gly) (interchain with G-Cter in SAMP2). Gly66 carries the post-translational modification 1-thioglycine; alternate. Residue Gly66 is modified to Glycyl adenylate; alternate. Gly66 is covalently cross-linked (Glycyl lysine isopeptide (Gly-Lys) (interchain with K-? in acceptor proteins); alternate).

Monomer. Monomeric and polymeric forms interact with NcsA. Post-translationally, the C-terminal glycine is likely acyl-adenylated (-COAMP) by UbaA, and also probably thiocarboxylated (-COSH) to function in sulfur transfer.

In terms of biological role, functions as a protein modifier covalently attached to lysine residues of substrate proteins, as well as a sulfur carrier in tRNA thiolation. The protein modification process is termed sampylation and involves the formation of an isopeptide bond between the SAMP2 C-terminal glycine carboxylate and the epsilon-amino group of lysine residues on target proteins. Is able to form polymeric chains with itself at Lys-58, similar to ubiquitin and other ubiquitin-like proteins. May serve as a proteolytic signal in the cell to target proteins for degradation by proteasomes. In Haloferax volcanii (strain ATCC 29605 / DSM 3757 / JCM 8879 / NBRC 14742 / NCIMB 2012 / VKM B-1768 / DS2) (Halobacterium volcanii), this protein is Small archaeal modifier protein 2 (samp2).